The chain runs to 363 residues: UDP-3-O-acylglucosamine N-acyltransferase (363 aa).

H266 (proton acceptor) is an active-site residue.

This sequence belongs to the transferase hexapeptide repeat family. LpxD subfamily. Homotrimer.

The enzyme catalyses a UDP-3-O-[(3R)-3-hydroxyacyl]-alpha-D-glucosamine + a (3R)-hydroxyacyl-[ACP] = a UDP-2-N,3-O-bis[(3R)-3-hydroxyacyl]-alpha-D-glucosamine + holo-[ACP] + H(+). Its pathway is bacterial outer membrane biogenesis; LPS lipid A biosynthesis. Catalyzes the N-acylation of UDP-3-O-acylglucosamine using 3-hydroxyacyl-ACP as the acyl donor. Is involved in the biosynthesis of lipid A, a phosphorylated glycolipid that anchors the lipopolysaccharide to the outer membrane of the cell. The polypeptide is UDP-3-O-acylglucosamine N-acyltransferase (Bordetella bronchiseptica (strain ATCC BAA-588 / NCTC 13252 / RB50) (Alcaligenes bronchisepticus)).